The primary structure comprises 526 residues: Ferrochelatase-2, chloroplastic (526 aa).

It belongs to the ferrochelatase family.

The protein localises to the plastid. Its subcellular location is the chloroplast. It carries out the reaction heme b + 2 H(+) = protoporphyrin IX + Fe(2+). It participates in porphyrin-containing compound metabolism; protoheme biosynthesis; protoheme from protoporphyrin-IX: step 1/1. In terms of biological role, catalyzes the ferrous insertion into protoporphyrin IX. The protein is Ferrochelatase-2, chloroplastic of Oryza sativa subsp. japonica (Rice).